A 357-amino-acid polypeptide reads, in one-letter code: Dihydroorotate dehydrogenase (quinone) (357 aa).

FMN contacts are provided by residues 61–65 (AGFDK) and Thr-85. Lys-65 lines the substrate pocket. 110–114 (NRFGF) serves as a coordination point for substrate. Residues Asn-141 and Asn-172 each contribute to the FMN site. Substrate is bound at residue Asn-172. Ser-175 acts as the Nucleophile in catalysis. Residue Asn-177 participates in substrate binding. FMN contacts are provided by Lys-217 and Gly-245. 246–247 (NT) lines the substrate pocket. FMN-binding positions include Gly-268, Gly-297, and 318–319 (YS).

It belongs to the dihydroorotate dehydrogenase family. Type 2 subfamily. Monomer. Requires FMN as cofactor.

The protein resides in the cell membrane. It catalyses the reaction (S)-dihydroorotate + a quinone = orotate + a quinol. Its pathway is pyrimidine metabolism; UMP biosynthesis via de novo pathway; orotate from (S)-dihydroorotate (quinone route): step 1/1. Its function is as follows. Catalyzes the conversion of dihydroorotate to orotate with quinone as electron acceptor. In Xanthobacter autotrophicus (strain ATCC BAA-1158 / Py2), this protein is Dihydroorotate dehydrogenase (quinone).